The primary structure comprises 159 residues: Phosphoribosylaminoimidazole carboxylase (159 aa).

6 residues coordinate substrate: S11, D14, S38, K41, G67, and S69.

It carries out the reaction 5-amino-1-(5-phospho-D-ribosyl)imidazole-4-carboxylate + H(+) = 5-amino-1-(5-phospho-beta-D-ribosyl)imidazole + CO2. It participates in purine metabolism; IMP biosynthesis via de novo pathway; 5-amino-1-(5-phospho-D-ribosyl)imidazole-4-carboxylate from 5-amino-1-(5-phospho-D-ribosyl)imidazole (carboxylase route): step 1/1. Catalyzes the reversible conversion of 5-aminoimidazole ribonucleotide (AIR) and CO(2) to 4-carboxy-5-aminoimidazole ribonucleotide (CAIR). Does not accept N5-carboxyaminoimidazole ribonucleotide (N5-CAIR) as a substrate. This is Phosphoribosylaminoimidazole carboxylase from Treponema denticola (strain ATCC 35405 / DSM 14222 / CIP 103919 / JCM 8153 / KCTC 15104).